We begin with the raw amino-acid sequence, 154 residues long: Interleukin-2 (154 aa).

The signal sequence occupies residues 1-20 (MYRMQLLSCIALSLALVTNS). Thr-23 carries O-linked (GalNAc...) threonine glycosylation. Cys-78 and Cys-126 are disulfide-bonded.

The protein belongs to the IL-2 family.

It is found in the secreted. In terms of biological role, cytokine produced by activated CD4-positive helper T-cells and to a lesser extend activated CD8-positive T-cells and natural killer (NK) cells that plays pivotal roles in the immune response and tolerance. Binds to a receptor complex composed of either the high-affinity trimeric IL-2R (IL2RA/CD25, IL2RB/CD122 and IL2RG/CD132) or the low-affinity dimeric IL-2R (IL2RB and IL2RG). Interaction with the receptor leads to oligomerization and conformation changes in the IL-2R subunits resulting in downstream signaling starting with phosphorylation of JAK1 and JAK3. In turn, JAK1 and JAK3 phosphorylate the receptor to form a docking site leading to the phosphorylation of several substrates including STAT5. This process leads to activation of several pathways including STAT, phosphoinositide-3-kinase/PI3K and mitogen-activated protein kinase/MAPK pathways. Functions as a T-cell growth factor and can increase NK-cell cytolytic activity as well. Promotes strong proliferation of activated B-cells and subsequently immunoglobulin production. Plays a pivotal role in regulating the adaptive immune system by controlling the survival and proliferation of regulatory T-cells, which are required for the maintenance of immune tolerance. Moreover, participates in the differentiation and homeostasis of effector T-cell subsets, including Th1, Th2, Th17 as well as memory CD8-positive T-cells. The sequence is that of Interleukin-2 (IL2) from Macaca mulatta (Rhesus macaque).